The primary structure comprises 463 residues: Glycine--tRNA ligase (463 aa).

R100 and E175 together coordinate substrate. Residues 207–209 (RNE), 217–222 (FRTREF), 291–292 (EL), and 335–338 (GADR) contribute to the ATP site. 222-226 (FEQME) contacts substrate. Substrate is bound at residue 331-335 (EPSLG).

Belongs to the class-II aminoacyl-tRNA synthetase family. Homodimer.

The protein resides in the cytoplasm. The catalysed reaction is tRNA(Gly) + glycine + ATP = glycyl-tRNA(Gly) + AMP + diphosphate. Functionally, catalyzes the attachment of glycine to tRNA(Gly). The sequence is that of Glycine--tRNA ligase from Clostridium beijerinckii (strain ATCC 51743 / NCIMB 8052) (Clostridium acetobutylicum).